The following is a 453-amino-acid chain: Macrophage scavenger receptor types I and II (453 aa).

The Cytoplasmic segment spans residues 1–50 (MAQWDDFPDQQEDTDSCTESVKFDARSVTALLPPHPKNGPTLQERMKSYK). The residue at position 27 (Ser27) is a Phosphoserine. The helical; Signal-anchor for type II membrane protein transmembrane segment at 51-76 (TALITLYLIVFVVLVPIIGIVAAQLL) threads the bilayer. The interval 77 to 108 (KWETKNCTVGSVNADISPSPEGKGNGSEDEMR) is spacer. Topologically, residues 77-453 (KWETKNCTVG…DEDAGVTCTT (377 aa)) are extracellular. N-linked (GlcNAc...) asparagine glycosylation is found at Asn82, Asn101, Asn142, Asn183, Asn220, Asn248, and Asn266. Positions 194-255 (ETLNGRVQEN…LNNITNDLRL (62 aa)) form a coiled coil. Disordered regions lie at residues 267–295 (ITLL…PGFP) and 313–349 (PGVR…QRQS). In terms of domain architecture, Collagen-like spans 272 to 343 (GPPGPPGEKG…KGQKGEKGSG (72 aa)). The region spanning 352–452 (VRLVGGSGPH…HDEDAGVTCT (101 aa)) is the SRCR domain. Intrachain disulfides connect Cys377/Cys441, Cys390/Cys451, and Cys421/Cys431.

As to quaternary structure, homotrimer. Interacts with MYO18A.

The protein resides in the membrane. Functionally, membrane glycoproteins implicated in the pathologic deposition of cholesterol in arterial walls during atherogenesis. Two types of receptor subunits exist. These receptors mediate the endocytosis of a diverse group of macromolecules, including modified low density lipoproteins (LDL). The polypeptide is Macrophage scavenger receptor types I and II (MSR1) (Bos taurus (Bovine)).